A 337-amino-acid polypeptide reads, in one-letter code: Acetyl-coenzyme A synthetase (337 aa).

Residues Arg131–Arg134, Thr249, and Asn273 contribute to the CoA site. Gly325–Pro327 lines the ATP pocket.

It belongs to the ATP-dependent AMP-binding enzyme family. Mg(2+) is required as a cofactor. Post-translationally, acetylated. Deacetylation by the SIR2-homolog deacetylase activates the enzyme.

The catalysed reaction is acetate + ATP + CoA = acetyl-CoA + AMP + diphosphate. Its function is as follows. Catalyzes the conversion of acetate into acetyl-CoA (AcCoA), an essential intermediate at the junction of anabolic and catabolic pathways. AcsA undergoes a two-step reaction. In the first half reaction, AcsA combines acetate with ATP to form acetyl-adenylate (AcAMP) intermediate. In the second half reaction, it can then transfer the acetyl group from AcAMP to the sulfhydryl group of CoA, forming the product AcCoA. In Nostoc linckia, this protein is Acetyl-coenzyme A synthetase (acsA).